The following is a 471-amino-acid chain: uncharacterized protein (471 aa).

The interval Lys-13–Pro-57 is disordered. The segment covering Ser-27 to Lys-39 has biased composition (low complexity). Residues Val-40–Leu-50 show a composition bias toward basic residues. 2 consecutive CCHC-type zinc fingers follow at residues Tyr-397 to Gln-414 and Ser-417 to Asn-434. The gag-like cysteine motif stretch occupies residues Cys-438–Cys-457.

The protein to corresponding ORF of B.mori (R1BM).

This is an uncharacterized protein from Drosophila melanogaster (Fruit fly).